The sequence spans 100 residues: Urease subunit gamma 2 (100 aa).

It belongs to the urease gamma subunit family. In terms of assembly, heterotrimer of UreA (gamma), UreB (beta) and UreC (alpha) subunits. Three heterotrimers associate to form the active enzyme.

The protein localises to the cytoplasm. It catalyses the reaction urea + 2 H2O + H(+) = hydrogencarbonate + 2 NH4(+). It functions in the pathway nitrogen metabolism; urea degradation; CO(2) and NH(3) from urea (urease route): step 1/1. Its function is as follows. Disrupting the ure2 operon has no effect on urease activity or pathogen survival in BALB/c mice when administered orally. The polypeptide is Urease subunit gamma 2 (Brucella abortus (strain 2308)).